The sequence spans 206 residues: High frequency lysogenization protein HflD homolog (206 aa).

It belongs to the HflD family.

It localises to the cytoplasm. It is found in the cell inner membrane. The sequence is that of High frequency lysogenization protein HflD homolog from Pseudomonas savastanoi pv. phaseolicola (strain 1448A / Race 6) (Pseudomonas syringae pv. phaseolicola (strain 1448A / Race 6)).